The sequence spans 339 residues: 1-aminocyclopropane-1-carboxylate deaminase (339 aa).

Lys52 carries the post-translational modification N6-(pyridoxal phosphate)lysine. Ser79 (nucleophile) is an active-site residue.

It belongs to the ACC deaminase/D-cysteine desulfhydrase family. As to quaternary structure, homotrimer. The cofactor is pyridoxal 5'-phosphate.

The enzyme catalyses 1-aminocyclopropane-1-carboxylate + H2O = 2-oxobutanoate + NH4(+). Catalyzes a cyclopropane ring-opening reaction, the irreversible conversion of 1-aminocyclopropane-1-carboxylate (ACC) to ammonia and alpha-ketobutyrate. Allows growth on ACC as a nitrogen source. The chain is 1-aminocyclopropane-1-carboxylate deaminase from Bradyrhizobium sp. (strain BTAi1 / ATCC BAA-1182).